A 177-amino-acid chain; its full sequence is Ribosome maturation factor RimP (177 aa).

This sequence belongs to the RimP family.

It localises to the cytoplasm. In terms of biological role, required for maturation of 30S ribosomal subunits. The polypeptide is Ribosome maturation factor RimP (Streptococcus sanguinis (strain SK36)).